A 132-amino-acid polypeptide reads, in one-letter code: Phosphoribosyl-AMP cyclohydrolase (132 aa).

Residue aspartate 79 participates in Mg(2+) binding. Cysteine 80 contacts Zn(2+). Positions 81 and 83 each coordinate Mg(2+). Positions 100 and 107 each coordinate Zn(2+).

The protein belongs to the PRA-CH family. Homodimer. Mg(2+) serves as cofactor. Zn(2+) is required as a cofactor.

The protein resides in the cytoplasm. The enzyme catalyses 1-(5-phospho-beta-D-ribosyl)-5'-AMP + H2O = 1-(5-phospho-beta-D-ribosyl)-5-[(5-phospho-beta-D-ribosylamino)methylideneamino]imidazole-4-carboxamide. It participates in amino-acid biosynthesis; L-histidine biosynthesis; L-histidine from 5-phospho-alpha-D-ribose 1-diphosphate: step 3/9. Its function is as follows. Catalyzes the hydrolysis of the adenine ring of phosphoribosyl-AMP. In Delftia acidovorans (strain DSM 14801 / SPH-1), this protein is Phosphoribosyl-AMP cyclohydrolase.